Here is a 673-residue protein sequence, read N- to C-terminus: UvrABC system protein B (673 aa).

Residues 26 to 183 (EGLEDGLAHQ…RRLAELQYTR (158 aa)) form the Helicase ATP-binding domain. 39–46 (GVTGSGKT) contributes to the ATP binding site. Positions 92–115 (YYDYYQPEAYVPSSDTFIEKDASV) match the Beta-hairpin motif. In terms of domain architecture, Helicase C-terminal spans 431–597 (QVDDLLSEIR…GLNKKVVDIL (167 aa)). Residues 633–668 (QQKIHELEGQMMQHAQNLEFEEAAQIRDQLHQLREL) form the UVR domain.

This sequence belongs to the UvrB family. Forms a heterotetramer with UvrA during the search for lesions. Interacts with UvrC in an incision complex.

It is found in the cytoplasm. In terms of biological role, the UvrABC repair system catalyzes the recognition and processing of DNA lesions. A damage recognition complex composed of 2 UvrA and 2 UvrB subunits scans DNA for abnormalities. Upon binding of the UvrA(2)B(2) complex to a putative damaged site, the DNA wraps around one UvrB monomer. DNA wrap is dependent on ATP binding by UvrB and probably causes local melting of the DNA helix, facilitating insertion of UvrB beta-hairpin between the DNA strands. Then UvrB probes one DNA strand for the presence of a lesion. If a lesion is found the UvrA subunits dissociate and the UvrB-DNA preincision complex is formed. This complex is subsequently bound by UvrC and the second UvrB is released. If no lesion is found, the DNA wraps around the other UvrB subunit that will check the other stand for damage. This is UvrABC system protein B from Salmonella agona (strain SL483).